The following is a 505-amino-acid chain: Lysine--tRNA ligase (505 aa).

2 residues coordinate Mg(2+): Glu409 and Glu416.

The protein belongs to the class-II aminoacyl-tRNA synthetase family. As to quaternary structure, homodimer. Mg(2+) is required as a cofactor.

The protein localises to the cytoplasm. The enzyme catalyses tRNA(Lys) + L-lysine + ATP = L-lysyl-tRNA(Lys) + AMP + diphosphate. This is Lysine--tRNA ligase from Latilactobacillus sakei subsp. sakei (strain 23K) (Lactobacillus sakei subsp. sakei).